We begin with the raw amino-acid sequence, 315 residues long: tRNA dimethylallyltransferase (315 aa).

10–17 contributes to the ATP binding site; that stretch reads GPTATGKS. 12-17 provides a ligand contact to substrate; sequence TATGKS. Residues 35–38 form an interaction with substrate tRNA region; it reads DSMQ.

The protein belongs to the IPP transferase family. In terms of assembly, monomer. The cofactor is Mg(2+).

It carries out the reaction adenosine(37) in tRNA + dimethylallyl diphosphate = N(6)-dimethylallyladenosine(37) in tRNA + diphosphate. In terms of biological role, catalyzes the transfer of a dimethylallyl group onto the adenine at position 37 in tRNAs that read codons beginning with uridine, leading to the formation of N6-(dimethylallyl)adenosine (i(6)A). This chain is tRNA dimethylallyltransferase, found in Caldanaerobacter subterraneus subsp. tengcongensis (strain DSM 15242 / JCM 11007 / NBRC 100824 / MB4) (Thermoanaerobacter tengcongensis).